Consider the following 310-residue polypeptide: MSADFRHEPVLANEILELLRPRPGELFLDGTLGGGGHSGLLLEAGARVIALDKDPRALAAATARLARFGEAFRAVRSDFRDAKNVLEALGIAAVDGALVDLGVSSPQLDEAERGFSFSRPGPLDMRMGDTGETLEDLLRRIDERELARILREYGEEPFARPVARAVKAALETEAPLDTARLAEVVAGAIPRKAWPHRIHPATRTFQALRIAVNDELGALAAWLDGLPGVLAPGGRAAAISFHSLEDRMVKEKFRALTQACTCPPDLPVCACGAKASFAAITRKAVKASDEEIARNPRARSARLRAVEKLR.

Residues 35–37 (GGH), aspartate 52, phenylalanine 79, aspartate 100, and glutamine 107 contribute to the S-adenosyl-L-methionine site.

It belongs to the methyltransferase superfamily. RsmH family.

The protein localises to the cytoplasm. The catalysed reaction is cytidine(1402) in 16S rRNA + S-adenosyl-L-methionine = N(4)-methylcytidine(1402) in 16S rRNA + S-adenosyl-L-homocysteine + H(+). In terms of biological role, specifically methylates the N4 position of cytidine in position 1402 (C1402) of 16S rRNA. The protein is Ribosomal RNA small subunit methyltransferase H of Anaeromyxobacter dehalogenans (strain 2CP-1 / ATCC BAA-258).